The sequence spans 93 residues: UPF0147 protein PH1921.2 (93 aa).

Belongs to the UPF0147 family.

The polypeptide is UPF0147 protein PH1921.2 (Pyrococcus horikoshii (strain ATCC 700860 / DSM 12428 / JCM 9974 / NBRC 100139 / OT-3)).